The primary structure comprises 550 residues: MKTKFIFITGGVLSSLGKGLAAASIGALLKARGLKVTIQKLDPYINVDPGTMNPFQHGEVYVTDDGAETDLDLGHYERYLGESLSQKNNYTSGSIYNRVITKERRGDYLGGTVQVIPHVTDEIKNAILGLAEDEPDVALIEIGGTVGDIEGLPFLEAIRQLRGDLGKDHCLYVHLTLVPYLKAAGEHKTKPTQHSVKELRSIGIQPDIILCRCEKAISAELKRKIALFCDVDQDAVFSSVDVDNIYEVPLRFYEEGFDQKIAIMLRLPAKNANLESWETLIHTCSHPEGQVTIGIVGKYVDLKEAYKSLHEALIHGGVANKVKVNLRYVNSEEITEANVAEKLAGCDGILVPGGFGHRGVEGKIRSIRHAREHKIPFFGICLGMQCAVIEYARNVLGLADANSEEFNELTDNKVIYLMTEWYDFRKGAVERRDASSDKGGTLRLGAYPCVVVPGTRAWDAYGAERVDERHRHRFEFNKAYFEAMAEKGLVFSGLSPDGELVEIVELPDHPWFLGCQFHPEFKSNPMRPHPLFREFIKAAKKEAMGGKKGK.

The segment at 1–267 is amidoligase domain; that stretch reads MKTKFIFITG…DQKIAIMLRL (267 aa). CTP is bound at residue S14. S14 contributes to the UTP binding site. ATP is bound by residues 15–20 and D72; that span reads SLGKGL. Residues D72 and E141 each coordinate Mg(2+). CTP is bound by residues 148-150, 188-193, and K224; these read DIE and KTKPTQ. UTP-binding positions include 188–193 and K224; that span reads KTKPTQ. Residues 292–545 form the Glutamine amidotransferase type-1 domain; the sequence is TIGIVGKYVD…IKAAKKEAMG (254 aa). Position 354 (G354) interacts with L-glutamine. The active-site Nucleophile; for glutamine hydrolysis is C381. L-glutamine-binding positions include 382-385, E405, and R473; that span reads LGMQ. Active-site residues include H518 and E520.

The protein belongs to the CTP synthase family. As to quaternary structure, homotetramer.

It catalyses the reaction UTP + L-glutamine + ATP + H2O = CTP + L-glutamate + ADP + phosphate + 2 H(+). The enzyme catalyses L-glutamine + H2O = L-glutamate + NH4(+). It carries out the reaction UTP + NH4(+) + ATP = CTP + ADP + phosphate + 2 H(+). It functions in the pathway pyrimidine metabolism; CTP biosynthesis via de novo pathway; CTP from UDP: step 2/2. With respect to regulation, allosterically activated by GTP, when glutamine is the substrate; GTP has no effect on the reaction when ammonia is the substrate. The allosteric effector GTP functions by stabilizing the protein conformation that binds the tetrahedral intermediate(s) formed during glutamine hydrolysis. Inhibited by the product CTP, via allosteric rather than competitive inhibition. Functionally, catalyzes the ATP-dependent amination of UTP to CTP with either L-glutamine or ammonia as the source of nitrogen. Regulates intracellular CTP levels through interactions with the four ribonucleotide triphosphates. The polypeptide is CTP synthase (Nitratidesulfovibrio vulgaris (strain DSM 19637 / Miyazaki F) (Desulfovibrio vulgaris)).